Consider the following 180-residue polypeptide: uncharacterized protein (180 aa).

The interval 1-31 (MSTYEEEHGIQQNSRDYQEVGGTSQEEQRRQ) is disordered. The residue at position 2 (Ser2) is an N-acetylserine. The RING-type zinc-finger motif lies at 109–153 (CSICYTNYLEDEYPLVVELPHCHHKFDLECLSVWLSRSTTCPLCR).

This is an uncharacterized protein from Saccharomyces cerevisiae (strain ATCC 204508 / S288c) (Baker's yeast).